Here is a 103-residue protein sequence, read N- to C-terminus: MKNKRVLTNVILLLLVVFITIIPFFVAKNGEFGGSDDQAEEAITQIDENYEPWFSPLFEPASGEIESLLFALQAAIGAGVIGFGLGYLKGKKKVNDEVNDKHR.

2 consecutive transmembrane segments (helical) span residues 6–26 and 68–88; these read VLTN…PFFV and LLFA…LGYL.

Belongs to the CbiN family. In terms of assembly, forms an energy-coupling factor (ECF) transporter complex composed of an ATP-binding protein (A component, CbiO), a transmembrane protein (T component, CbiQ) and 2 possible substrate-capture proteins (S components, CbiM and CbiN) of unknown stoichimetry.

It is found in the cell membrane. It functions in the pathway cofactor biosynthesis; adenosylcobalamin biosynthesis. Its function is as follows. Part of the energy-coupling factor (ECF) transporter complex CbiMNOQ involved in cobalt import. The protein is Cobalt transport protein CbiN of Clostridium perfringens (strain 13 / Type A).